We begin with the raw amino-acid sequence, 338 residues long: Heat-inducible transcription repressor HrcA (338 aa).

The protein belongs to the HrcA family.

Its function is as follows. Negative regulator of class I heat shock genes (grpE-dnaK-dnaJ and groELS operons). Prevents heat-shock induction of these operons. This is Heat-inducible transcription repressor HrcA from Bacillus cereus (strain 03BB102).